A 622-amino-acid chain; its full sequence is Probable potassium transport system protein Kup (622 aa).

Helical transmembrane passes span 9–29 (LPAV…TSPL), 52–72 (FLSL…LAFV), 101–121 (VLLV…VITP), 137–157 (PALT…LFVI), 169–189 (FGPV…ISIF), 213–233 (VAFF…ALYA), 247–267 (WFTV…ALIL), 287–309 (FPMV…SGVF), 337–357 (IYIP…VVTF), 363–383 (LAAA…ILAC), 396–416 (VVKI…LANV), and 419–439 (FFAG…VMAT).

Belongs to the HAK/KUP transporter (TC 2.A.72) family.

It is found in the cell inner membrane. The catalysed reaction is K(+)(in) + H(+)(in) = K(+)(out) + H(+)(out). In terms of biological role, transport of potassium into the cell. Likely operates as a K(+):H(+) symporter. This is Probable potassium transport system protein Kup from Tolumonas auensis (strain DSM 9187 / NBRC 110442 / TA 4).